The following is a 489-amino-acid chain: Ribulose-1,5 bisphosphate carboxylase/oxygenase large subunit N-methyltransferase, chloroplastic (489 aa).

Residues 1 to 37 (MATIFSGGSVSPFLFHTNKGTSFTPKAPILHLKRSFS) constitute a chloroplast transit peptide. The SET domain occupies 64-288 (EGVITAKTPV…AGEQVYIQYD (225 aa)). S-adenosyl-L-methionine contacts are provided by residues 80–82 (EGL) and arginine 222. 3 residues coordinate substrate: arginine 222, arginine 226, and aspartate 239. 242–243 (NH) contacts S-adenosyl-L-methionine. Substrate is bound by residues tyrosine 254, tyrosine 287, and tyrosine 300.

It belongs to the class V-like SAM-binding methyltransferase superfamily. Plant protein-lysine LSMT methyltransferase family. Homotrimer. In terms of tissue distribution, highly expressed in leaf.

The protein localises to the plastid. It is found in the chloroplast. The catalysed reaction is L-lysyl-[ribulose-1,5-bisphosphate carboxylase] + 3 S-adenosyl-L-methionine = N(6),N(6),N(6)-trimethyl-L-lysyl-[ribulose-1,5-bisphosphate carboxylase] + 3 S-adenosyl-L-homocysteine + 3 H(+). It carries out the reaction [fructose-bisphosphate aldolase]-L-lysine + 3 S-adenosyl-L-methionine = [fructose-bisphosphate aldolase]-N(6),N(6),N(6)-trimethyl-L-lysine + 3 S-adenosyl-L-homocysteine + 3 H(+). Functionally, methylates 'Lys-14' of the large subunit of RuBisCO. Can also use with lower efficiency chloroplastic fructose-bisphosphate aldolases and gamma-tocopherol methyltransferase as substrates, but not a cytosolic aldolase. The sequence is that of Ribulose-1,5 bisphosphate carboxylase/oxygenase large subunit N-methyltransferase, chloroplastic (RBCMT) from Pisum sativum (Garden pea).